We begin with the raw amino-acid sequence, 288 residues long: Diaminopimelate epimerase (288 aa).

Substrate is bound by residues Asn14 and Asn67. The active-site Proton donor is the Cys76. Residues 77–78 (GN), Asn166, Asn199, and 217–218 (ER) contribute to the substrate site. Cys226 (proton acceptor) is an active-site residue. Residue 227–228 (GT) participates in substrate binding.

The protein belongs to the diaminopimelate epimerase family. Homodimer.

It is found in the cytoplasm. It carries out the reaction (2S,6S)-2,6-diaminopimelate = meso-2,6-diaminopimelate. It functions in the pathway amino-acid biosynthesis; L-lysine biosynthesis via DAP pathway; DL-2,6-diaminopimelate from LL-2,6-diaminopimelate: step 1/1. Functionally, catalyzes the stereoinversion of LL-2,6-diaminopimelate (L,L-DAP) to meso-diaminopimelate (meso-DAP), a precursor of L-lysine and an essential component of the bacterial peptidoglycan. The polypeptide is Diaminopimelate epimerase (Bacillus anthracis (strain A0248)).